The chain runs to 1048 residues: FERM, ARHGEF and pleckstrin domain-containing protein 1 (1048 aa).

Positions 1 to 37 (MGEIEQKPTPASRLGAPENSGISTLERGQKPPPTPSG) are disordered. S20 and S23 each carry phosphoserine. T24 is subject to Phosphothreonine. The FERM domain maps to 40-320 (MTVKIQMLDD…EHHAFFRLFE (281 aa)). Residues S340, S373, S389, S403, S427, S433, and S437 each carry the phosphoserine modification. The interval 361 to 536 (FERKHSKIHS…TDDEEEGRRK (176 aa)) is disordered. A compositionally biased stretch (polar residues) spans 371–395 (TRSLVSQPTAPNSEVPKQSPQSASL). Polar residues-rich tracts occupy residues 472-491 (STGS…NSQG) and 498-513 (VTLS…QASP). Phosphoserine is present on residues S512 and S516. The DH domain occupies 542 to 733 (KAYYIAKEVS…TEMVAQLHGT (192 aa)). In terms of domain architecture, PH 1 spans 762 to 859 (EFIRLGSLSK…WMEDIQMAID (98 aa)). A phosphoserine mark is found at S836, S875, and S881. The segment at 865-907 (NGPTPELLASSPPDNKSPDEATAADQESEDDLSASRTSLERQA) is disordered. Phosphothreonine is present on T886. A phosphoserine mark is found at S892, S899, and S902. The region spanning 935 to 1032 (ENQLSGNLLR…WMEVIRSATS (98 aa)) is the PH 2 domain.

Interacts with CADM1. Interacts with RAC1. Detected in brain cortex, hippocampus, striatum, olfactory bulb, cerebellum and hindbrain (at protein level).

The protein localises to the cell membrane. Its subcellular location is the synapse. It localises to the synaptosome. The protein resides in the cytoplasm. It is found in the cytosol. The protein localises to the cell projection. Its subcellular location is the filopodium. It localises to the dendrite. The protein resides in the dendritic spine. Functionally, functions as a guanine nucleotide exchange factor for RAC1. May play a role in semaphorin signaling. Plays a role in the assembly and disassembly of dendritic filopodia, the formation of dendritic spines, regulation of dendrite length and ultimately the formation of synapses. The chain is FERM, ARHGEF and pleckstrin domain-containing protein 1 (Farp1) from Mus musculus (Mouse).